Consider the following 217-residue polypeptide: Small ribosomal subunit protein uS3 (217 aa).

The KH type-2 domain occupies 38–106; the sequence is IRKFIDNELK…KVHINVIEIK (69 aa).

This sequence belongs to the universal ribosomal protein uS3 family. As to quaternary structure, part of the 30S ribosomal subunit. Forms a tight complex with proteins S10 and S14.

In terms of biological role, binds the lower part of the 30S subunit head. Binds mRNA in the 70S ribosome, positioning it for translation. The chain is Small ribosomal subunit protein uS3 from Staphylococcus epidermidis (strain ATCC 35984 / DSM 28319 / BCRC 17069 / CCUG 31568 / BM 3577 / RP62A).